The sequence spans 20 residues: Isocitrate dehydrogenase [NADP] (20 aa).

Belongs to the isocitrate and isopropylmalate dehydrogenases family. The cofactor is Mn(2+). Requires Mg(2+) as cofactor.

It is found in the cytoplasm. It catalyses the reaction D-threo-isocitrate + NADP(+) = 2-oxoglutarate + CO2 + NADPH. The chain is Isocitrate dehydrogenase [NADP] from Naegleria fowleri (Brain eating amoeba).